The chain runs to 249 residues: Pleckstrin homology domain-containing family F member 2 (249 aa).

The residue at position 16 (Ser-16) is a Phosphoserine. One can recognise a PH domain in the interval 35 to 131 (VLIGEGVLTK…WMNHINKCVT (97 aa)). At Lys-44 the chain carries N6-acetyllysine. The segment at 152–212 (DSEATVCMRC…ICDFCYDLLS (61 aa)) adopts an FYVE-type zinc-finger fold. Zn(2+) contacts are provided by Cys-158, Cys-161, Cys-175, Cys-178, Cys-183, Cys-186, Cys-204, and Cys-207. Positions 221–233 (PTRSDSYSQSLKS) are enriched in polar residues. Residues 221 to 249 (PTRSDSYSQSLKSPLNDASDDDDDDDSSD) are disordered. Residues 238-249 (ASDDDDDDDSSD) are compositionally biased toward acidic residues. 2 positions are modified to phosphoserine: Ser-239 and Ser-248.

May interact with EEA1. Expressed in brain, stomach and thymus, as well as in kidney, spleen, and skeletal muscle. Also expressed in peripheral blood mononuclear cells and dendritic cells.

The protein resides in the early endosome membrane. Its subcellular location is the endoplasmic reticulum. In terms of biological role, may play a role in early endosome fusion upstream of RAB5, hence regulating receptor trafficking and fluid-phase transport. Enhances cellular sensitivity to TNF-induced apoptosis. The protein is Pleckstrin homology domain-containing family F member 2 (Plekhf2) of Mus musculus (Mouse).